Consider the following 82-residue polypeptide: Small ribosomal subunit protein bS16 (82 aa).

It belongs to the bacterial ribosomal protein bS16 family.

The chain is Small ribosomal subunit protein bS16 from Haemophilus influenzae (strain 86-028NP).